A 371-amino-acid polypeptide reads, in one-letter code: Transcription factor MYB12 (371 aa).

HTH myb-type domains lie at 9 to 61 (KVGI…INYL) and 62 to 116 (RSDL…SRKL). 2 DNA-binding regions (H-T-H motif) span residues 37 to 61 (WRSL…INYL) and 89 to 112 (WSLI…NSHL). Residues 136–183 (NASSAPPPPQAKRRLGRTSRSAMKPKIHRTKTRKTKKTSAPPEPNADV) are disordered. The segment covering 146-172 (AKRRLGRTSRSAMKPKIHRTKTRKTKK) has biased composition (basic residues).

Expressed in stems and flower buds. Expressed in seedlings, roots, cotyledons and apical meristems.

It is found in the nucleus. Flavonol-specific transcription activator involved in the regulation of several genes of flavonoid biosynthesis. Activates the expression of CHS, CHI, F3H and FLS1. Controls flavonol biosynthesis mainly in the root. Confers tolerance to UV-B. This is Transcription factor MYB12 from Arabidopsis thaliana (Mouse-ear cress).